A 1711-amino-acid chain; its full sequence is Nuclear pore complex protein Nup214 (1711 aa).

Repeat copies occupy residues 472–473, 486–487, 497–498, 511–512, 514–515, 535–536, 588–589, and 598–599. Residues 472–1703 are 45 X 2 AA repeats of F-G; the sequence is FGAAAAKAPA…NSNAQKPAFG (1232 aa). 2 leucine-zipper regions span residues 650–672 and 767–788; these read LDDL…VQGL and LTRL…KSKL. The disordered stretch occupies residues 886–905; the sequence is KPATANKYTQAAVAPPSPPD. Repeat unit 9 spans residues 1009–1010; that stretch reads FG. A disordered region spans residues 1012–1081; it reads GSPAVAAPTP…NKSFGFGGFT (70 aa). 2 stretches are compositionally biased toward basic and acidic residues: residues 1037 to 1051 and 1058 to 1072; these read TKPK…KEFK and EESK…ETEN. The interval 1044 to 1711 is interaction with emb; sequence AAESKEFKAV…FGGSSFMNYR (668 aa). 8 tandem repeats follow at residues 1075–1076, 1077–1078, 1097–1098, 1106–1107, 1135–1136, 1218–1219, 1229–1230, and 1240–1241. Residues 1251-1261 show a composition bias toward polar residues; the sequence is TSVTEANNKTD. A disordered region spans residues 1251-1270; it reads TSVTEANNKTDPISTTPSAI. 27 tandem repeats follow at residues 1356–1357, 1388–1389, 1399–1400, 1434–1435, 1449–1450, 1458–1459, 1472–1473, 1481–1482, 1487–1488, 1507–1508, 1512–1513, 1539–1540, 1547–1548, 1562–1563, 1571–1572, 1584–1585, 1588–1589, 1601–1602, 1617–1618, 1623–1624, 1629–1630, 1635–1636, 1641–1642, 1647–1648, 1650–1651, 1662–1663, and 1686–1687. Disordered regions lie at residues 1533 to 1552 and 1557 to 1614; these read SPQA…SPAT and SGGS…TTTP. 2 stretches are compositionally biased toward gly residues: residues 1560–1572 and 1582–1595; these read SIFG…GGFG and GGFG…GGGS. Low complexity predominate over residues 1596 to 1614; that stretch reads VAQTGFGSPQAPQQQTTTP. Residues 1688 to 1698 are compositionally biased toward polar residues; that stretch reads NLAQTGNSNAQ. Residues 1688–1711 are disordered; that stretch reads NLAQTGNSNAQKPAFGGSSFMNYR. The stretch at 1702–1703 is repeat 45; that stretch reads FG.

Component of the nuclear pore complex. Interacts with mbo/Nup88 and (via C-terminus) with emb to attenuate emb-mediated protein export.

It localises to the nucleus. It is found in the nuclear pore complex. The protein resides in the nucleus membrane. In terms of biological role, part of the nuclear pore complex. Serves as a docking site in the receptor-mediated import of substrates across the nuclear pore complex including emb, RanGAP and phosphorylated Mad. Protects mbo/Nup88 from proteasomal degradation at the nuclear pore. Together with mbo/Nup88, sequesters emb in the cytoplasm and thereby attenuates nuclear export signal (NES)-mediated nuclear export. Together with mbo/Nup88, required for the nuclear import of the Rel family transcription factors dorsal (dl) and Dorsal-related immunity factor (Dif) and the activation of an immune response. The sequence is that of Nuclear pore complex protein Nup214 from Drosophila melanogaster (Fruit fly).